Reading from the N-terminus, the 59-residue chain is MLKRFPTPILKVYWPFFVAGAAVYYGMSKAADLSSNTKEFINDPRNPRFAKGGKFVEVD.

A helical membrane pass occupies residues 9 to 25; that stretch reads ILKVYWPFFVAGAAVYY.

The protein belongs to the ATPase j subunit family. F-type ATPases have 2 components, CF(1) - the catalytic core - and CF(0) - the membrane proton channel. In yeast, the dimeric form of ATP synthase consists of 17 polypeptides: alpha, beta, gamma, delta, epsilon, 4 (B), 5 (OSCP), 6 (A), 8, 9 (C), d, E (Tim11), f, g, h, i/j and k.

It is found in the mitochondrion membrane. Mitochondrial membrane ATP synthase (F(1)F(0) ATP synthase or Complex V) produces ATP from ADP in the presence of a proton gradient across the membrane which is generated by electron transport complexes of the respiratory chain. F-type ATPases consist of two structural domains, F(1) - containing the extramembraneous catalytic core and F(0) - containing the membrane proton channel, linked together by a central stalk and a peripheral stalk. During catalysis, ATP synthesis in the catalytic domain of F(1) is coupled via a rotary mechanism of the central stalk subunits to proton translocation. Part of the complex F(0) domain. Minor subunit located with subunit a in the membrane. The protein is ATP synthase subunit J, mitochondrial (ATP18) of Saccharomyces cerevisiae (strain ATCC 204508 / S288c) (Baker's yeast).